A 282-amino-acid polypeptide reads, in one-letter code: Phycocyanobilin lyase subunit beta (282 aa).

Belongs to the CpcE/RpcE/PecE family. In terms of assembly, cpcE and CpcF associate to form a lyase.

Its function is as follows. Required for the chromophorylation of the CpcA gene product. This chain is Phycocyanobilin lyase subunit beta (cpcF1), found in Pseudanabaena tenuis (strain PCC 7409).